The sequence spans 225 residues: Insulin-induced gene 2 protein (225 aa).

At Met-1–Val-28 the chain is on the cytoplasmic side. The helical transmembrane segment at Val-29 to Ile-51 threads the bilayer. At Gln-52–Ala-70 the chain is on the lumenal side. Residues Trp-71 to Tyr-88 traverse the membrane as a helical segment. The Cytoplasmic portion of the chain corresponds to Pro-89–Arg-103. A helical membrane pass occupies residues Glu-104–Asp-126. Topologically, residues Phe-127–Asn-129 are lumenal. The chain crosses the membrane as a helical span at residues Asn-130–Phe-148. Residues Asp-149–Ser-153 are Cytoplasmic-facing. Ser-151 is modified (phosphoserine). The chain crosses the membrane as a helical span at residues Gly-154 to Asn-175. Over Gly-176–Arg-189 the chain is Lumenal. The chain crosses the membrane as a helical span at residues Ser-190–Gly-207. Residues Arg-208–Glu-225 lie on the Cytoplasmic side of the membrane. Cys-215 is modified (cysteine sulfenic acid (-SOH); alternate). Residue Cys-215 forms a Glycyl cysteine thioester (Cys-Gly) (interchain with G-Cter in ubiquitin); alternate linkage. Positions Ala-219–Glu-225 match the KxHxx motif.

The protein belongs to the INSIG family. Interacts with SCAP; interaction is direct and only takes place in the presence of sterols; it prevents interaction between SCAP and the coat protein complex II (COPII). Associates with the SCAP-SREBP complex (composed of SCAP and SREBF1/SREBP1 or SREBF2/SREBP2); association is mediated via its interaction with SCAP and only takes place in the presence of sterols. Interacts with RNF139. Interacts with RNF145. Phosphorylation at Ser-151 by PCK1 reduces binding to oxysterol, disrupting the interaction between INSIG2 and SCAP, thereby promoting nuclear translocation of SREBP proteins (SREBF1/SREBP1 or SREBF2/SREBP2) and subsequent transcription of downstream lipogenesis-related genes. Post-translationally, polyubiquitinated by AMFR/gp78 at Cys-215 in some tissues such as adipose tissues, undifferentiated myoblasts and liver, leading to its degradation. In differentiated myotubes, Cys-215 oxidation prevents ubiquitination at the same site, resulting in protein stabilization. In terms of processing, oxidized at Cys-215 in differentiated myotubes, preventing ubiquitination at the same site, and resulting in protein stabilization.

It is found in the endoplasmic reticulum membrane. Functionally, oxysterol-binding protein that mediates feedback control of cholesterol synthesis by controlling both endoplasmic reticulum to Golgi transport of SCAP and degradation of HMGCR. Acts as a negative regulator of cholesterol biosynthesis by mediating the retention of the SCAP-SREBP complex in the endoplasmic reticulum, thereby blocking the processing of sterol regulatory element-binding proteins (SREBPs) SREBF1/SREBP1 and SREBF2/SREBP2. Binds oxysterol, including 22-hydroxycholesterol, 24-hydroxycholesterol, 25-hydroxycholesterol and 27-hydroxycholesterol, regulating interaction with SCAP and retention of the SCAP-SREBP complex in the endoplasmic reticulum. In presence of oxysterol, interacts with SCAP, retaining the SCAP-SREBP complex in the endoplasmic reticulum, thereby preventing SCAP from escorting SREBF1/SREBP1 and SREBF2/SREBP2 to the Golgi. Sterol deprivation or phosphorylation by PCK1 reduce oxysterol-binding, disrupting the interaction between INSIG2 and SCAP, thereby promoting Golgi transport of the SCAP-SREBP complex, followed by processing and nuclear translocation of SREBF1/SREBP1 and SREBF2/SREBP2. Also regulates cholesterol synthesis by regulating degradation of HMGCR: initiates the sterol-mediated ubiquitin-mediated endoplasmic reticulum-associated degradation (ERAD) of HMGCR via recruitment of the reductase to the ubiquitin ligase RNF139. The protein is Insulin-induced gene 2 protein of Rattus norvegicus (Rat).